Here is a 272-residue protein sequence, read N- to C-terminus: Diaminopimelate epimerase (272 aa).

Substrate contacts are provided by asparagine 11 and asparagine 60. Cysteine 69 functions as the Proton donor in the catalytic mechanism. Substrate-binding positions include glycine 70 to asparagine 71, asparagine 181, and glutamate 199 to arginine 200. Cysteine 209 serves as the catalytic Proton acceptor. A substrate-binding site is contributed by glycine 210–threonine 211.

It belongs to the diaminopimelate epimerase family. As to quaternary structure, homodimer.

The protein localises to the cytoplasm. The catalysed reaction is (2S,6S)-2,6-diaminopimelate = meso-2,6-diaminopimelate. Its pathway is amino-acid biosynthesis; L-lysine biosynthesis via DAP pathway; DL-2,6-diaminopimelate from LL-2,6-diaminopimelate: step 1/1. Its function is as follows. Catalyzes the stereoinversion of LL-2,6-diaminopimelate (L,L-DAP) to meso-diaminopimelate (meso-DAP), a precursor of L-lysine and an essential component of the bacterial peptidoglycan. This Helicobacter pylori (strain P12) protein is Diaminopimelate epimerase.